Reading from the N-terminus, the 279-residue chain is ATP synthase gamma chain (279 aa).

This sequence belongs to the ATPase gamma chain family. As to quaternary structure, F-type ATPases have 2 components, CF(1) - the catalytic core - and CF(0) - the membrane proton channel. CF(1) has five subunits: alpha(3), beta(3), gamma(1), delta(1), epsilon(1). CF(0) has three main subunits: a, b and c.

It is found in the cell membrane. Functionally, produces ATP from ADP in the presence of a proton gradient across the membrane. The gamma chain is believed to be important in regulating ATPase activity and the flow of protons through the CF(0) complex. The protein is ATP synthase gamma chain of Mycoplasmopsis pulmonis (strain UAB CTIP) (Mycoplasma pulmonis).